We begin with the raw amino-acid sequence, 139 residues long: MGGGERYNIPAPQTRNVSKNQQQLSRQKTKDQNSQMKIVHKKKERGHTYNSSSAAWQAMQNGGKNKNFPNNQNWNSSLSSPTLLFKSQTNQNYAGAKFSEPPSPSVLPKPPSHWVPVSFNPSDKEIMTFQLKTLLKVQV.

Residues 1–111 (MGGGERYNIP…PSPSVLPKPP (111 aa)) are disordered. Composition is skewed to polar residues over residues 11–36 (APQT…NSQM) and 48–59 (TYNSSSAAWQAM). The segment covering 60–75 (QNGGKNKNFPNNQNWN) has biased composition (low complexity). The segment covering 76–93 (SSLSSPTLLFKSQTNQNY) has biased composition (polar residues). Positions 99–105 (SEPPSPS) match the SH3-binding motif. The span at 101-111 (PPSPSVLPKPP) shows a compositional bias: pro residues.

It belongs to the PNRC family. PNRC2 subfamily. As to quaternary structure, interacts with UPF1/RENT1; preferentially interacts with hyperphosphorylated form. Interacts with DCP1A. Interacts with many nuclear receptors including ESR1, ESRRA, ESRRG, NR3C1/GR, NR5A1, PGR, TR, RAR and RXR.

It localises to the nucleus. It is found in the cytoplasm. The protein resides in the P-body. Involved in nonsense-mediated mRNA decay (NMD) by acting as a bridge between the mRNA decapping complex and the NMD machinery. May act by targeting the NMD machinery to the P-body and recruiting the decapping machinery to aberrant mRNAs. Required for UPF1/RENT1 localization to the P-body. Plays a role in glucocorticoid receptor-mediated mRNA degradation by interacting with the glucocorticoid receptor NR3C1 in a ligand-dependent manner when it is bound to the 5' UTR of target mRNAs and recruiting the RNA helicase UPF1 and the mRNA-decapping enzyme DCP1A, leading to RNA decay. Also acts as a nuclear receptor coactivator. May play a role in controlling the energy balance between energy storage and energy expenditure. The sequence is that of Proline-rich nuclear receptor coactivator 2 (PNRC2) from Bos taurus (Bovine).